The primary structure comprises 201 residues: U1 small nuclear ribonucleoprotein C (201 aa).

The Matrin-type zinc finger occupies 4–36 (YYCEYCDIYLTHSSPVGRRQHNQGRKHISAKIE). The segment covering 137–154 (IQKPYNNFDNKNNNYNNK) has biased composition (low complexity). The segment at 137–176 (IQKPYNNFDNKNNNYNNKPITNSSYKNDKQDYRNNNENND) is disordered.

This sequence belongs to the U1 small nuclear ribonucleoprotein C family. In terms of assembly, U1 snRNP is composed of the 7 core Sm proteins B/B', D1, D2, D3, E, F and G that assemble in a heptameric protein ring on the Sm site of the small nuclear RNA to form the core snRNP, and at least 3 U1 snRNP-specific proteins U1-70K, U1-A and U1-C. U1-C interacts with U1 snRNA and the 5' splice-site region of the pre-mRNA.

The protein resides in the nucleus. Functionally, component of the spliceosomal U1 snRNP, which is essential for recognition of the pre-mRNA 5' splice-site and the subsequent assembly of the spliceosome. U1-C is directly involved in initial 5' splice-site recognition for both constitutive and regulated alternative splicing. The interaction with the 5' splice-site seems to precede base-pairing between the pre-mRNA and the U1 snRNA. Stimulates commitment or early (E) complex formation by stabilizing the base pairing of the 5' end of the U1 snRNA and the 5' splice-site region. This Plasmodium yoelii yoelii protein is U1 small nuclear ribonucleoprotein C.